The chain runs to 275 residues: Translation initiation factor 2 subunit alpha (275 aa).

The S1 motif domain occupies 12-83 (GELVVATVKR…KKGHIDLSLR (72 aa)).

It belongs to the eIF-2-alpha family. In terms of assembly, heterotrimer composed of an alpha, a beta and a gamma chain.

Functionally, eIF-2 functions in the early steps of protein synthesis by forming a ternary complex with GTP and initiator tRNA. This chain is Translation initiation factor 2 subunit alpha, found in Pyrococcus furiosus (strain ATCC 43587 / DSM 3638 / JCM 8422 / Vc1).